A 510-amino-acid chain; its full sequence is ATP synthase subunit alpha (510 aa).

ATP is bound at residue 169-176 (GDRQTGKT).

This sequence belongs to the ATPase alpha/beta chains family. F-type ATPases have 2 components, CF(1) - the catalytic core - and CF(0) - the membrane proton channel. CF(1) has five subunits: alpha(3), beta(3), gamma(1), delta(1), epsilon(1). CF(0) has three main subunits: a(1), b(2) and c(9-12). The alpha and beta chains form an alternating ring which encloses part of the gamma chain. CF(1) is attached to CF(0) by a central stalk formed by the gamma and epsilon chains, while a peripheral stalk is formed by the delta and b chains.

Its subcellular location is the cell inner membrane. The enzyme catalyses ATP + H2O + 4 H(+)(in) = ADP + phosphate + 5 H(+)(out). Produces ATP from ADP in the presence of a proton gradient across the membrane. The alpha chain is a regulatory subunit. This Rickettsia felis (strain ATCC VR-1525 / URRWXCal2) (Rickettsia azadi) protein is ATP synthase subunit alpha.